Here is a 239-residue protein sequence, read N- to C-terminus: MKVSLFVTCLIDLFYTEVGKATVELLERLGCKVDFPEAQTCCGQPAYNSGYVKEAKEAMKQMMRAFADADYVVTPSGSCAAMLKEYPHIFHGDPEWEAEAKRLAAKTYELTQFLVDVLKVEDVGASLHGRATYHTSCHMTRLLGVKDAPLRLLEHVKGLELVPLPNAHQCCGFGGTFSVKMGPISEQMVDEKIGHIEEAEADYLIGADCGCLLNIGGRIARLGKPIRVMHIAEVLNARN.

Belongs to the LutA/YkgE family.

In terms of biological role, is involved in L-lactate degradation and allows cells to grow with lactate as the sole carbon source. This Geobacillus kaustophilus (strain HTA426) protein is Lactate utilization protein A.